We begin with the raw amino-acid sequence, 528 residues long: Phosphoenolpyruvate carboxykinase (ATP) (528 aa).

Substrate-binding residues include Arg56, Tyr192, and Lys198. Residues Lys198, His217, and 233–241 (GLSGTGKTT) each bind ATP. Residues Lys198 and His217 each contribute to the Mn(2+) site. Mn(2+) is bound at residue Asp254. Residues Glu282, Arg319, and Thr444 each contribute to the ATP site. Arg319 is a substrate binding site.

This sequence belongs to the phosphoenolpyruvate carboxykinase (ATP) family. Mn(2+) serves as cofactor.

It localises to the cytoplasm. It catalyses the reaction oxaloacetate + ATP = phosphoenolpyruvate + ADP + CO2. It functions in the pathway carbohydrate biosynthesis; gluconeogenesis. Functionally, involved in the gluconeogenesis. Catalyzes the conversion of oxaloacetate (OAA) to phosphoenolpyruvate (PEP) through direct phosphoryl transfer between the nucleoside triphosphate and OAA. In Bacillus anthracis (strain A0248), this protein is Phosphoenolpyruvate carboxykinase (ATP).